We begin with the raw amino-acid sequence, 304 residues long: Non-structural maintenance of chromosomes element 3 homolog (304 aa).

Disordered stretches follow at residues 1 to 82 and 285 to 304; these read MLQK…PRSQ and ALADEENRARPQPSGPAPSS. Basic and acidic residues predominate over residues 32-43; the sequence is AGEDARVLRDGF. Phosphoserine occurs at positions 57, 60, and 64. Over residues 60–80 the composition is skewed to low complexity; that stretch reads SQGPSPQGARRAQAAPAVGPR. Residues 78–304 are interaction with NSMCE1; the sequence is GPRSQKQLEL…PQPSGPAPSS (227 aa). One can recognise an MAGE domain in the interval 85–285; the sequence is LELKVSELVQ…KDWPAQYCEA (201 aa).

Component of the SMC5-SMC6 complex which consists at least of SMC5, SMC6, NSMCE2, NSMCE1, NSMCE4A or EID3 and NSMCE3. NSMCE1, NSMCE4A or EID3 and NSMCE3 probably form a subcomplex that bridges the head domains of the SMC5:SMC6 heterodimer. Interacts with PJA1. Interacts with E2F1 (via C-terminus). Interacts with NGFR (via C-terminus). Interacts with NSMCE1. Interacts with NSMCE4. Interacts with SMC6. Interacts with EID3. Ubiquitous.

Its subcellular location is the cytoplasm. The protein resides in the nucleus. The protein localises to the chromosome. It localises to the telomere. Component of the SMC5-SMC6 complex, a complex involved in repair of DNA double-strand breaks by homologous recombination. The complex may promote sister chromatid homologous recombination by recruiting the SMC1-SMC3 cohesin complex to double-strand breaks. The complex is required for telomere maintenance via recombination in ALT (alternative lengthening of telomeres) cell lines and mediates sumoylation of shelterin complex (telosome) components which is proposed to lead to shelterin complex disassembly in ALT-associated PML bodies (APBs). In vitro enhances ubiquitin ligase activity of NSMCE1. Proposed to act through recruitment and/or stabilization of the Ubl-conjugating enzyme (E2) at the E3:substrate complex. May be a growth suppressor that facilitates the entry of the cell into cell cycle arrest. The sequence is that of Non-structural maintenance of chromosomes element 3 homolog from Homo sapiens (Human).